The following is a 346-amino-acid chain: Eukaryotic translation initiation factor 3 subunit I (346 aa).

WD repeat units lie at residues 8–47 (GHERSLTQVKYNREGDLIFTSGKDNVASVWYAMNGERLGT), 50–89 (GHNGSIWSIDVDQHTEYAVTGSADFSVKVWRVRDGSIAHS), 150–189 (EGCAPVLVASWSYDGKYIVAGHQDGKISKYNGVTGECLEI), 192–233 (LHKQ…KTYE), and 289–328 (DHFGPVNYIAVSPQGTSYASGGEDGFVRLHHFDKSYFDFK).

The protein belongs to the eIF-3 subunit I family. Component of the eukaryotic translation initiation factor 3 (eIF-3) complex.

It localises to the cytoplasm. Functionally, component of the eukaryotic translation initiation factor 3 (eIF-3) complex, which is involved in protein synthesis of a specialized repertoire of mRNAs and, together with other initiation factors, stimulates binding of mRNA and methionyl-tRNAi to the 40S ribosome. The eIF-3 complex specifically targets and initiates translation of a subset of mRNAs involved in cell proliferation. In Eremothecium gossypii (strain ATCC 10895 / CBS 109.51 / FGSC 9923 / NRRL Y-1056) (Yeast), this protein is Eukaryotic translation initiation factor 3 subunit I.